An 828-amino-acid chain; its full sequence is MTKRILNVAEKPSAAKEIAAILSNKRATVREGFSKYNKLWDFKYNILNFNDCEMTFTSVTGHLMEIDVVEQFKPWASCDPIQLFDAPIRKTVPSDKEPLKKTLEREIKKADILILWLDCDREGENIAFEVLEVCKNAKKKFEFYRAHFSAIIPREIDRACKNLAKPNEKDSIAVDTRMEIDLRIGAAFTRFQTLYLKKFKIISNSDNQPKTTTPANGNILNNSNNNSSGKEIISYGPCQFPTLGFVVERYFRIVNFKPEDFWHLSVVHEKMDTSSGKMIPVTFSWCRNRLFDYTAAFILYEKCLDNTEATVVDVTSKESRYRPVPLTTIELQKAASKKLRISSVQTMQYAEELYTKGLISYPRTETDSFQAGTDLKGLIGNQASNPEWGAYASRLINNNQFVYPKSGKNNDNSHPPIHPTSSATGLSGNLKKIYDFITRRFLACCSEESVFANTTVTIDIQGERFSETGTMVLKLGYLEVYPFDKRNDKLIPTYQKGERFTPKRIDLTKGTTVAPHYITEAELLTAMDNNKIGTDATMATHIQTIQDRFYVKKNESNQFVPSNLGVSLVASYELMGFEFSKPNLRAAIEADVDKISRGQKTKQEVLLSTIEKYKQLYQLANQNINCFDRSFREYYEPADPKGGEFRVLVSQFSRCGKCNGKMQYKSDQNPEAPKRILFCPQCIDTFDLPKNGDISQLVTSMGVPQNCPICQYQVLSVRNPINDKSYTICPKCRNSPPDPIHKKPFHCFQCTFNCNLATGNKQQQQQQQQQQQQTNYNRNNNNNNTNSARPITTRTTRTTTQHRTFTASNNNFNNNNRNSDRNNNNFIF.

Positions 4–149 constitute a Toprim domain; it reads RILNVAEKPS…KFEFYRAHFS (146 aa). The 451-residue stretch at 167 to 617 folds into the Topo IA-type catalytic domain; it reads NEKDSIAVDT…STIEKYKQLY (451 aa). The active-site O-(5'-phospho-DNA)-tyrosine intermediate is Y361. Residues 763 to 828 are disordered; it reads QQQQQQQQQQ…SDRNNNNFIF (66 aa).

It belongs to the type IA topoisomerase family.

It catalyses the reaction ATP-independent breakage of single-stranded DNA, followed by passage and rejoining.. Functionally, releases the supercoiling and torsional tension of DNA introduced during the DNA replication and transcription by transiently cleaving and rejoining one strand of the DNA duplex. Introduces a single-strand break via transesterification at a target site in duplex DNA. The scissile phosphodiester is attacked by the catalytic tyrosine of the enzyme, resulting in the formation of a DNA-(5'-phosphotyrosyl)-enzyme intermediate and the expulsion of a 3'-OH DNA strand. The free DNA strand than undergoes passage around the unbroken strand thus removing DNA supercoils. Finally, in the religation step, the DNA 3'-OH attacks the covalent intermediate to expel the active-site tyrosine and restore the DNA phosphodiester backbone. This Dictyostelium discoideum (Social amoeba) protein is DNA topoisomerase 3 (top3).